A 625-amino-acid chain; its full sequence is FMRFamide-activated amiloride-sensitive sodium channel (625 aa).

Residues 1–67 lie on the Cytoplasmic side of the membrane; sequence MKYTSAATKP…IVTSRDTKRK (67 aa). A helical transmembrane segment spans residues 68-89; it reads VIWALLVIAGFTAATLQLSLLV. Residues 90 to 536 lie on the Extracellular side of the membrane; the sequence is RKYLQFQVVE…LADLFADIGG (447 aa). Asn-134, Asn-196, Asn-303, Asn-349, Asn-365, Asn-372, and Asn-473 each carry an N-linked (GlcNAc...) asparagine glycan. A helical membrane pass occupies residues 537 to 557; that stretch reads TLGLWMGISVLTIMELIELVI. Residues 558-625 are Cytoplasmic-facing; it reads RLTGLVFNSE…DFRRGVESPV (68 aa). Residues 570 to 591 form a disordered region; sequence LPRGPTTVNNNNGSNNHSQSTS. A compositionally biased stretch (low complexity) spans 575–591; it reads TTVNNNNGSNNHSQSTS.

It belongs to the amiloride-sensitive sodium channel (TC 1.A.6) family. As to expression, muscle and nervous tissue.

It is found in the membrane. FMRFamide-gated ionotropic receptor. This Cornu aspersum (Brown garden snail) protein is FMRFamide-activated amiloride-sensitive sodium channel.